A 171-amino-acid chain; its full sequence is Small ribosomal subunit protein uS5 (171 aa).

The S5 DRBM domain maps to 15 to 78 (LEEKVVKINR…EKAKKQLVRI (64 aa)).

Belongs to the universal ribosomal protein uS5 family. Part of the 30S ribosomal subunit. Contacts proteins S4 and S8.

Functionally, with S4 and S12 plays an important role in translational accuracy. In terms of biological role, located at the back of the 30S subunit body where it stabilizes the conformation of the head with respect to the body. This is Small ribosomal subunit protein uS5 from Onion yellows phytoplasma (strain OY-M).